A 354-amino-acid chain; its full sequence is Long form salivary protein D7L3 (354 aa).

Residues 1–26 (MQLTPRSVHLVHLLLAATTLISPSWS) form the signal peptide.

The protein belongs to the PBP/GOBP family.

It localises to the secreted. Its function is as follows. Modulates blood feeding of female mosquitoes on vertebrate species by binding and sequestering different mediators involved in the host response. Binds serotonin with high affinity. Binds weakly noradrenaline and histamine. Does not bind tryptamine, octopamine, dopamine, adrenaline, leukotriene C4, leukotriene D4, leukotriene B4, ADP and U-46619, a stable analog of thromboxane A2. Inhibits agonist-induced platelet aggregation. Exhibits vasodilating activity. The sequence is that of Long form salivary protein D7L3 from Anopheles gambiae (African malaria mosquito).